A 482-amino-acid chain; its full sequence is MLSLIIRRSRSRFIIHGIKISCNSLSAVDSSSSVLVSRRTFSSTPALSYFGFNYGKISNLNQRFGNYAYSGSSFASSTRSLSSEAVAVAATCDGLTVERIIANQWPILDENEGDWKSHAAAIAQSIQVIKRRLQWKKLLVRLKVLSAELNKSDLWDDPTHAGKISREHGSLTGKMKGVMTFERELLEHIDMLKLAKEENDSELESETLKALIDMRRVSKEKELEALLSADNDPCSCYIEVQAGAGGTESNDWAAMVMEMYKTWAQRRKFSVTVVDEAPGEIAGIKRATIKVNGEYAYGYAKAEVGVHRLVRISPFDSGKRRHTSFAAVAVIPILGDGSTRVEINDSDLRIERFRSGGAGGQHANTTDSAVRIVHIPTGITATCQNERSQHSNKASAMAVLQSRLDQLEMARQTAMNAQHTQSLTEISWGNQIRTYVLHPYRMVKDLRTNYEVSDPDSVLEGDLDGFILSFLSSSLDKDDPEH.

The N-terminal 21 residues, 1 to 21 (MLSLIIRRSRSRFIIHGIKIS), are a transit peptide targeting the chloroplast.

Belongs to the prokaryotic/mitochondrial release factor family.

It is found in the plastid. It localises to the chloroplast stroma. Its function is as follows. Directs the termination of translation in response to the peptide chain termination codon UGA. Required for the proper translation, stability and normal processing of UGA-containing polycistronic transcripts in chloroplasts. This is Peptide chain release factor PrfB2, chloroplastic from Arabidopsis thaliana (Mouse-ear cress).